The chain runs to 339 residues: RNA polymerase II holoenzyme cyclin-like subunit (339 aa).

The segment at 48-67 (PNSADSSNGNAANNGGGNGR) is disordered. Residues 49 to 60 (NSADSSNGNAAN) are compositionally biased toward low complexity. Positions 93 to 194 (RIYCYFLIMK…LIEELQCYLI (102 aa)) constitute a Cyclin N-terminal domain.

Belongs to the cyclin family. Cyclin C subfamily. As to quaternary structure, component of the SRB8-11 complex, a regulatory module of the Mediator complex.

The protein resides in the nucleus. Functionally, component of the SRB8-11 complex. The SRB8-11 complex is a regulatory module of the Mediator complex which is itself involved in regulation of basal and activated RNA polymerase II-dependent transcription. The SRB8-11 complex may be involved in the transcriptional repression of a subset of genes regulated by Mediator. It may inhibit the association of the Mediator complex with RNA polymerase II to form the holoenzyme complex. The SRB8-11 complex phosphorylates the C-terminal domain (CTD) of the largest subunit of RNA polymerase II. The protein is RNA polymerase II holoenzyme cyclin-like subunit (SSN8) of Candida glabrata (strain ATCC 2001 / BCRC 20586 / JCM 3761 / NBRC 0622 / NRRL Y-65 / CBS 138) (Yeast).